We begin with the raw amino-acid sequence, 361 residues long: 3-dehydroquinate synthase (361 aa).

Belongs to the archaeal-type DHQ synthase family.

The catalysed reaction is 2-amino-2,3,7-trideoxy-D-lyxo-hept-6-ulosonate + NAD(+) + H2O = 3-dehydroquinate + NH4(+) + NADH + H(+). Its function is as follows. Catalyzes the oxidative deamination and cyclization of 2-amino-3,7-dideoxy-D-threo-hept-6-ulosonic acid (ADH) to yield 3-dehydroquinate (DHQ), which is fed into the canonical shikimic pathway of aromatic amino acid biosynthesis. The protein is 3-dehydroquinate synthase of Methanococcus maripaludis (strain C5 / ATCC BAA-1333).